Consider the following 419-residue polypeptide: Protein FAM181B (419 aa).

A disordered region spans residues 107–157 (LMGAAPPGPSSPGAADTPAKRPLAGAQTVPVPVPAHGKAAPRREASQAAAA).

Belongs to the FAM181 family.

The polypeptide is Protein FAM181B (FAM181B) (Bos taurus (Bovine)).